A 351-amino-acid polypeptide reads, in one-letter code: DNA polymerase IV (351 aa).

The UmuC domain occupies 3 to 187 (ILFVDFDYFF…IDIDEVPGVG (185 aa)). D7 and D105 together coordinate Mg(2+). E106 is a catalytic residue.

Belongs to the DNA polymerase type-Y family. Requires Mg(2+) as cofactor.

It catalyses the reaction DNA(n) + a 2'-deoxyribonucleoside 5'-triphosphate = DNA(n+1) + diphosphate. Functionally, poorly processive, error-prone DNA polymerase involved in untargeted mutagenesis. Copies undamaged DNA at stalled replication forks, which arise in vivo from mismatched or misaligned primer ends. These misaligned primers can be extended by PolIV. Exhibits no 3'-5' exonuclease (proofreading) activity. May be involved in translesional synthesis. The sequence is that of DNA polymerase IV from Sulfurisphaera tokodaii (strain DSM 16993 / JCM 10545 / NBRC 100140 / 7) (Sulfolobus tokodaii).